The primary structure comprises 399 residues: Oligoribonuclease NrnB (399 aa).

Mn(2+) serves as cofactor. Requires Co(2+) as cofactor. Mg(2+) is required as a cofactor.

It localises to the cytoplasm. Functionally, degrades RNA oligonucleotides with a length of 5 nucleotides in a 3'- to 5'-direction. Less active on shorter RNA oligonucleotides and on those with a length of 24 nucleotides. Prefers RNA oligonucleotides containing adenines rather than cytosines. The chain is Oligoribonuclease NrnB (nrnB) from Bacillus subtilis (strain 168).